A 244-amino-acid chain; its full sequence is Type III pantothenate kinase (244 aa).

6–13 serves as a coordination point for ATP; that stretch reads DVGNTRIK. Substrate contacts are provided by residues Tyr-87 and 94–97; that span reads GIDR. Catalysis depends on Asp-96, which acts as the Proton acceptor. Asp-117 contacts K(+). An ATP-binding site is contributed by Thr-120. Thr-172 provides a ligand contact to substrate.

It belongs to the type III pantothenate kinase family. As to quaternary structure, homodimer. Requires NH4(+) as cofactor. K(+) is required as a cofactor.

It is found in the cytoplasm. It carries out the reaction (R)-pantothenate + ATP = (R)-4'-phosphopantothenate + ADP + H(+). It functions in the pathway cofactor biosynthesis; coenzyme A biosynthesis; CoA from (R)-pantothenate: step 1/5. Its function is as follows. Catalyzes the phosphorylation of pantothenate (Pan), the first step in CoA biosynthesis. In Flavobacterium johnsoniae (strain ATCC 17061 / DSM 2064 / JCM 8514 / BCRC 14874 / CCUG 350202 / NBRC 14942 / NCIMB 11054 / UW101) (Cytophaga johnsonae), this protein is Type III pantothenate kinase.